The primary structure comprises 368 residues: NAD(P)H-quinone oxidoreductase subunit 1, chloroplastic (368 aa).

A run of 6 helical transmembrane segments spans residues 27–47, 97–117, 130–150, 269–289, 308–328, and 348–368; these read FIWI…GVLV, WLFN…YLVI, IGVF…LMAG, SSLF…PFLL, IIIG…IAIM, and FLLP…AFLL.

The protein belongs to the complex I subunit 1 family. NDH is composed of at least 16 different subunits, 5 of which are encoded in the nucleus.

It localises to the plastid. The protein localises to the chloroplast thylakoid membrane. The catalysed reaction is a plastoquinone + NADH + (n+1) H(+)(in) = a plastoquinol + NAD(+) + n H(+)(out). It catalyses the reaction a plastoquinone + NADPH + (n+1) H(+)(in) = a plastoquinol + NADP(+) + n H(+)(out). Functionally, NDH shuttles electrons from NAD(P)H:plastoquinone, via FMN and iron-sulfur (Fe-S) centers, to quinones in the photosynthetic chain and possibly in a chloroplast respiratory chain. The immediate electron acceptor for the enzyme in this species is believed to be plastoquinone. Couples the redox reaction to proton translocation, and thus conserves the redox energy in a proton gradient. This Physcomitrium patens (Spreading-leaved earth moss) protein is NAD(P)H-quinone oxidoreductase subunit 1, chloroplastic.